Consider the following 564-residue polypeptide: Proline--tRNA ligase (564 aa).

It belongs to the class-II aminoacyl-tRNA synthetase family. ProS type 1 subfamily. Homodimer.

It localises to the cytoplasm. The catalysed reaction is tRNA(Pro) + L-proline + ATP = L-prolyl-tRNA(Pro) + AMP + diphosphate. Functionally, catalyzes the attachment of proline to tRNA(Pro) in a two-step reaction: proline is first activated by ATP to form Pro-AMP and then transferred to the acceptor end of tRNA(Pro). As ProRS can inadvertently accommodate and process non-cognate amino acids such as alanine and cysteine, to avoid such errors it has two additional distinct editing activities against alanine. One activity is designated as 'pretransfer' editing and involves the tRNA(Pro)-independent hydrolysis of activated Ala-AMP. The other activity is designated 'posttransfer' editing and involves deacylation of mischarged Ala-tRNA(Pro). The misacylated Cys-tRNA(Pro) is not edited by ProRS. The chain is Proline--tRNA ligase from Xanthomonas axonopodis pv. citri (strain 306).